Consider the following 569-residue polypeptide: Falcipain-1 (569 aa).

Topologically, residues 1–35 are cytoplasmic; the sequence is MVAIKEMKEFAFARPSLVETLNKKKKFLKKKEKRT. A propeptide spans 1–332 (activation peptide); sequence MVAIKEMKEF…KRNEKDIFSK (332 aa). The helical; Signal-anchor for type II membrane protein transmembrane segment at 36-56 threads the bilayer; sequence FVLSIYAFITFIIFCIGILYF. Over 57–569 the chain is Lumenal; it reads TNKSSAHNNN…IGEEVFYPIL (513 aa). Residues Asn58, Asn98, Asn121, and Asn127 are each glycosylated (N-linked (GlcNAc...) asparagine). A disordered region spans residues 97–118; that stretch reads LNESSNEEDEEKYTLNSETYNN. Intrachain disulfides connect Cys354–Cys395, Cys388–Cys428, and Cys413–Cys433. Residue Cys357 is part of the active site. N-linked (GlcNAc...) asparagine glycosylation is found at Asn479 and Asn487. An intrachain disulfide couples Cys482 to Cys558. Residues His488 and Asn533 contribute to the active site.

This sequence belongs to the peptidase C1 family. Post-translationally, contains disulfide bonds.

The protein localises to the membrane. It is found in the cytoplasmic granule. Cysteine protease. In the mosquito midgut, required for parasite development. In Plasmodium falciparum (isolate 3D7), this protein is Falcipain-1.